Consider the following 304-residue polypeptide: Coenzyme PQQ synthesis protein B (304 aa).

Belongs to the PqqB family.

The protein operates within cofactor biosynthesis; pyrroloquinoline quinone biosynthesis. Its function is as follows. May be involved in the transport of PQQ or its precursor to the periplasm. The chain is Coenzyme PQQ synthesis protein B from Azoarcus sp. (strain BH72).